The sequence spans 349 residues: Anthranilate phosphoribosyltransferase (349 aa).

Residues Gly-84, 87–88 (GD), Thr-92, 94–97 (NIST), 112–120 (KHGNRAASS), and Ser-124 each bind 5-phospho-alpha-D-ribose 1-diphosphate. Gly-84 contributes to the anthranilate binding site. Ser-96 is a Mg(2+) binding site. Position 115 (Asn-115) interacts with anthranilate. Residue Arg-170 participates in anthranilate binding. Mg(2+) contacts are provided by Asp-228 and Glu-229.

It belongs to the anthranilate phosphoribosyltransferase family. Homodimer. The cofactor is Mg(2+).

The catalysed reaction is N-(5-phospho-beta-D-ribosyl)anthranilate + diphosphate = 5-phospho-alpha-D-ribose 1-diphosphate + anthranilate. Its pathway is amino-acid biosynthesis; L-tryptophan biosynthesis; L-tryptophan from chorismate: step 2/5. Its function is as follows. Catalyzes the transfer of the phosphoribosyl group of 5-phosphorylribose-1-pyrophosphate (PRPP) to anthranilate to yield N-(5'-phosphoribosyl)-anthranilate (PRA). This is Anthranilate phosphoribosyltransferase from Leifsonia xyli subsp. xyli (strain CTCB07).